The sequence spans 262 residues: Translation initiation factor 2 subunit alpha (262 aa).

Positions 15–86 (GELVVGTVHK…RKGHVDVSMK (72 aa)) constitute an S1 motif domain.

Belongs to the eIF-2-alpha family. Heterotrimer composed of an alpha, a beta and a gamma chain.

EIF-2 functions in the early steps of protein synthesis by forming a ternary complex with GTP and initiator tRNA. The protein is Translation initiation factor 2 subunit alpha (eif2a) of Methanothermobacter thermautotrophicus (strain ATCC 29096 / DSM 1053 / JCM 10044 / NBRC 100330 / Delta H) (Methanobacterium thermoautotrophicum).